A 609-amino-acid chain; its full sequence is Threonine--tRNA ligase (609 aa).

The interval methionine 1–glutamate 143 is editing domain. 2 catalytic regions span residues proline 195–proline 491 and arginine 196–proline 491. Zn(2+) is bound by residues cysteine 288, histidine 339, and histidine 460.

The protein belongs to the class-II aminoacyl-tRNA synthetase family. Homodimer. The cofactor is Zn(2+).

The protein localises to the cytoplasm. It catalyses the reaction tRNA(Thr) + L-threonine + ATP = L-threonyl-tRNA(Thr) + AMP + diphosphate + H(+). Catalyzes the attachment of threonine to tRNA(Thr) in a two-step reaction: L-threonine is first activated by ATP to form Thr-AMP and then transferred to the acceptor end of tRNA(Thr). Also edits incorrectly charged L-seryl-tRNA(Thr). This chain is Threonine--tRNA ligase, found in Pyrobaculum neutrophilum (strain DSM 2338 / JCM 9278 / NBRC 100436 / V24Sta) (Thermoproteus neutrophilus).